We begin with the raw amino-acid sequence, 270 residues long: Urease accessory protein UreD (270 aa).

It belongs to the UreD family. In terms of assembly, ureD, UreF and UreG form a complex that acts as a GTP-hydrolysis-dependent molecular chaperone, activating the urease apoprotein by helping to assemble the nickel containing metallocenter of UreC. The UreE protein probably delivers the nickel.

Its subcellular location is the cytoplasm. Its function is as follows. Required for maturation of urease via the functional incorporation of the urease nickel metallocenter. The protein is Urease accessory protein UreD of Actinobacillus pleuropneumoniae serotype 5b (strain L20).